The sequence spans 249 residues: MISNSSIEDRINKNEAYIAKFFEIFSKNDKIRFHGVSLDRKALDSFMVRNNFKKRFVSGINLPILIRLHFYKKLFTILWLTVRTVALLSHARNIQCLIQESDGDAKDVARSIYITTAEFRNYLLTEKGFYVTTRSISHFRAILDSIRYPFGKDHASKNMELLPITYDLSFCTVFHGYLTSILEAYEFFRGVFKKYKAPLSSNFIAIGKTTDESNFSQLHHYFQKFDERIRRILHLISQELDGYCRIAKQ.

The protein localises to the cytoplasm. It is found in the nucleus. The protein resides in the nucleolus. This is an uncharacterized protein from Schizosaccharomyces pombe (strain 972 / ATCC 24843) (Fission yeast).